Reading from the N-terminus, the 245-residue chain is DNA polymerase sliding clamp (245 aa).

This sequence belongs to the PCNA family. In terms of assembly, homotrimer. The subunits circularize to form a toroid; DNA passes through its center. Replication factor C (RFC) is required to load the toroid on the DNA.

In terms of biological role, sliding clamp subunit that acts as a moving platform for DNA processing. Responsible for tethering the catalytic subunit of DNA polymerase and other proteins to DNA during high-speed replication. In Archaeoglobus fulgidus (strain ATCC 49558 / DSM 4304 / JCM 9628 / NBRC 100126 / VC-16), this protein is DNA polymerase sliding clamp.